The sequence spans 288 residues: Release factor glutamine methyltransferase (288 aa).

Residues 123-127, Asp-146, and Asn-190 contribute to the S-adenosyl-L-methionine site; that span reads GTGSG. 190-193 provides a ligand contact to substrate; the sequence is NPPY.

Belongs to the protein N5-glutamine methyltransferase family. PrmC subfamily.

It catalyses the reaction L-glutaminyl-[peptide chain release factor] + S-adenosyl-L-methionine = N(5)-methyl-L-glutaminyl-[peptide chain release factor] + S-adenosyl-L-homocysteine + H(+). Methylates the class 1 translation termination release factors RF1/PrfA and RF2/PrfB on the glutamine residue of the universally conserved GGQ motif. This Bacillus subtilis (strain 168) protein is Release factor glutamine methyltransferase.